A 72-amino-acid chain; its full sequence is MAIQSKYSNTQVESLITELLAVLEKHQSPTDLSLMALGNCVTHLLQNKVPAEAREVVTEQFAKALSQSVKNS.

This sequence belongs to the UPF0352 family.

The polypeptide is UPF0352 protein swp_2271 (Shewanella piezotolerans (strain WP3 / JCM 13877)).